The sequence spans 607 residues: MPYEIKKVFASLPQVERGVAKIIAGDPKGNNFLYTNGKSVIIRNIDNPAIADIYTEHAHQVVVARYAPSGFYIASGDTSGKLRIWDTTQKEHLLKYEYQPFAGKIKDIAWTEDSKRIAVVGEGREKFGSVFLWDTGSSVGEIIGNIKVINSVDIKQTRPYRLVTGSDDNCCAFFEGPPFKFKFTMSDHSRFVNCVRFSPDGSRLASAGADGQIFLYDGKTGEKVCSLGGSKAHDGGIYAVSWSPDGTQLLSASGDKTAKIWDVAANSAVTTFNLGSDVLDQQLGCLWQKDYLLSVSLSGYINYLDKNNPAKPFRIIKGHNKSIQCMTVDKSDGRSTIYTGSHDGHINYWDAETGENNTFTGKGHTNQVSSMDLDGSSQLITCSMDDTLRYTNLISKDYSSSESVKMDVQPKCVAVGSGGYVVTVCIGQIVLLKDKKKVFAIDSLDYEPEAVAIHKGSGTVSVGGADGKVHLYSIQGNSLKDEGKTLPAKGAVTDLAYSPDGAFLAVTDANKVVTVFSVADGYSEHNSYYGHHAKALSVAWSPDNEHFASSGMDMMVYVWTLSDPDTRIKMPDAHRLHHVSSLAWLDENTLATVSHDACVKQWTVTFK.

WD repeat units follow at residues 4-45 (EIKK…IRNI), 48-87 (PAIADIYTEHAHQVVVARYAPSGFYIASGDTSGKLRIWDT), 93-135 (LLKY…LWDT), 138-176 (SVGEIIGNIKVINSVDIKQTRPYRLVTGSDDNCCAFFEG), 180-218 (KFKFTMSDHSRFVNCVRFSPDGSRLASAGADGQIFLYDG), 224-263 (VCSLGGSKAHDGGIYAVSWSPDGTQLLSASGDKTAKIWDV), 270-306 (TTFNLGSDVLDQQLGCLWQKDYLLSVSLSGYINYLDK), 311-351 (KPFR…YWDA), 358-408 (TFTG…KMDV), 432-474 (LKDK…LYSI), 480-518 (KDEGKTLPAKGAVTDLAYSPDGAFLAVTDANKVVTVFSV), 523-561 (SEHNSYYGHHAKALSVAWSPDNEHFASSGMDMMVYVWTL), and 566-604 (TRIKMPDAHRLHHVSSLAWLDENTLATVSHDACVKQWTV).

This sequence belongs to the WD repeat AIP1 family.

Its subcellular location is the cell membrane. The protein resides in the cytoplasm. It is found in the cytoskeleton. The protein localises to the nucleus. Its function is as follows. Induces disassembly of actin filaments in conjunction with ADF/cofilin family proteins. Doesn't sever actin filaments alone, but caps the barbed ends of filaments severed by cofilin, which blocks annealing and depolymerization and allows more extensive severing by cofilin. This chain is WD repeat-containing protein 1-B (wdr1-b), found in Xenopus laevis (African clawed frog).